Reading from the N-terminus, the 61-residue chain is Metallothionein-1A (61 aa).

Position 1 is an N-acetylmethionine (Met-1). Residues 1 to 29 (MDPNCSCPTGGSCSCAGSCTCKACRCPSC) form a beta region. Cys-5, Cys-7, Cys-13, Cys-15, Cys-19, Cys-21, Cys-24, Cys-26, Cys-29, Cys-33, Cys-34, Cys-36, Cys-37, Cys-41, Cys-44, Cys-48, Cys-50, and Cys-57 together coordinate a divalent metal cation. The alpha stretch occupies residues 30 to 61 (KKSCCSCCPVGCAKCAQGCVCKGASDKCSCCA). Ser-58 is modified (phosphoserine). Cys-59 and Cys-60 together coordinate a divalent metal cation.

It belongs to the metallothionein superfamily. Type 1 family. As to quaternary structure, monomer.

Its function is as follows. Metallothioneins have a high content of cysteine residues that bind various heavy metals; these proteins are transcriptionally regulated by both heavy metals and glucocorticoids. In Bos taurus (Bovine), this protein is Metallothionein-1A (MT1A).